The following is a 379-amino-acid chain: Gap junction alpha-1 protein (379 aa).

Residues 2–23 (GDWSALGRLLDKVQAYSTAGGK) lie on the Cytoplasmic side of the membrane. Residues 24 to 44 (VWLSVLFIFRILLLGTAVESA) form a helical membrane-spanning segment. At 45-76 (WGDEQSAFVCNTQQPGCENVCYDKSFPISHVR) the chain is on the extracellular side. Disulfide bonds link C54-C192 and C187-C198. The chain crosses the membrane as a helical span at residues 77-97 (FWVLQIIFVSTPTLLYLAHVF). Over 98–163 (YLMRKEEKLN…TYIISILFKS (66 aa)) the chain is Cytoplasmic. A helical membrane pass occupies residues 164-184 (VFEVGFIIIQWYMYGFSLSAI). Residues 185 to 207 (YTCKRDPCPHQVDCFLSRPTEKT) are Extracellular-facing. A helical membrane pass occupies residues 208–228 (IFIWFMLIVSIVSLALNIIEL). At 229–379 (FYVTYKSIKD…SRPRPDDLEI (151 aa)) the chain is on the cytoplasmic side. The tract at residues 322-379 (STISNTHAQPFDFSDEHQNTKKMAPGHEMQPLTILDQRPSSRASSHASSRPRPDDLEI) is disordered. A compositionally biased stretch (low complexity) spans 359-371 (RPSSRASSHASSR).

This sequence belongs to the connexin family. Alpha-type (group II) subfamily. As to quaternary structure, a connexon is composed of a hexamer of connexins. Interacts with TMEM65. Expressed in most tissues. Highest levels found in eye and brain.

The protein localises to the cell membrane. The protein resides in the cell junction. It is found in the gap junction. Its function is as follows. One gap junction consists of a cluster of closely packed pairs of transmembrane channels, the connexons, through which materials of low MW diffuse from one cell to a neighboring cell. Plays an essential role in gap junction communication in the ventricles. This Xenopus laevis (African clawed frog) protein is Gap junction alpha-1 protein (gja1).